A 119-amino-acid chain; its full sequence is Large ribosomal subunit protein bL20 (119 aa).

This sequence belongs to the bacterial ribosomal protein bL20 family.

In terms of biological role, binds directly to 23S ribosomal RNA and is necessary for the in vitro assembly process of the 50S ribosomal subunit. It is not involved in the protein synthesizing functions of that subunit. This chain is Large ribosomal subunit protein bL20, found in Syntrophus aciditrophicus (strain SB).